A 122-amino-acid polypeptide reads, in one-letter code: Large ribosomal subunit protein bL12 (122 aa).

Belongs to the bacterial ribosomal protein bL12 family. Homodimer. Part of the ribosomal stalk of the 50S ribosomal subunit. Forms a multimeric L10(L12)X complex, where L10 forms an elongated spine to which 2 to 4 L12 dimers bind in a sequential fashion. Binds GTP-bound translation factors.

Its function is as follows. Forms part of the ribosomal stalk which helps the ribosome interact with GTP-bound translation factors. Is thus essential for accurate translation. The sequence is that of Large ribosomal subunit protein bL12 from Staphylococcus aureus (strain Newman).